An 874-amino-acid polypeptide reads, in one-letter code: MEQSLVKALLKNTNNPRLAWRIFKRIFSSPSEESHGISLDATPTIARILVRAKMHEEIQELHNLILSSSIQKTKLSSLLSVVSIFAKSNHIDKAFPQFQLVRSRFPENKPSVYLYNLLLESCIKERRVEFVSWLYKDMVLCGIAPQTYTFNLLIRALCDSSCVDAARELFDEMPEKGCKPNEFTFGILVRGYCKAGLTDKGLELLNAMESFGVLPNKVIYNTIVSSFCREGRNDDSEKMVEKMREEGLVPDIVTFNSRISALCKEGKVLDASRIFSDMELDEYLGLPRPNSITYNLMLKGFCKVGLLEDAKTLFESIRENDDLASLQSYNIWLQGLVRHGKFIEAETVLKQMTDKGIGPSIYSYNILMDGLCKLGMLSDAKTIVGLMKRNGVCPDAVTYGCLLHGYCSVGKVDAAKSLLQEMMRNNCLPNAYTCNILLHSLWKMGRISEAEELLRKMNEKGYGLDTVTCNIIVDGLCGSGELDKAIEIVKGMRVHGSAALGNLGNSYIGLVDDSLIENNCLPDLITYSTLLNGLCKAGRFAEAKNLFAEMMGEKLQPDSVAYNIFIHHFCKQGKISSAFRVLKDMEKKGCHKSLETYNSLILGLGIKNQIFEIHGLMDEMKEKGISPNICTYNTAIQYLCEGEKVEDATNLLDEMMQKNIAPNVFSFKYLIEAFCKVPDFDMAQEVFETAVSICGQKEGLYSLMFNELLAAGQLLKATELLEAVLDRGFELGTFLYKDLVESLCKKDELEVASGILHKMIDRGYGFDPAALMPVIDGLGKMGNKKEANSFADKMMEMASVGEVANKVDPNARDIHQKKHNKNGGNNWQNILHRDDGSGIALRSLSRVKKGWGQGDISSFQPPRVDYLDYWEDDG.

PPR repeat units lie at residues 111-145, 146-180, 181-215, 216-250, 251-285, 290-320, 325-359, 360-394, 395-429, 430-464, 465-499, 523-557, 558-592, 593-627, 628-662, 663-693, 697-731, 732-766, and 767-797; these read SVYL…GIAP, QTYT…GCKP, NEFT…GVLP, NKVI…GLVP, DIVT…EYLG, NSIT…IREN, SLQS…GIGP, SIYS…GVCP, DAVT…NCLP, NAYT…GYGL, DTVT…GSAA, DLIT…KLQP, DSVA…GCHK, SLET…GISP, NICT…NIAP, NVFS…AVSI, KEGL…GFEL, GTFL…GYGF, and DPAA…MMEM.

The protein belongs to the PPR family. P subfamily.

This Arabidopsis thaliana (Mouse-ear cress) protein is Pentatricopeptide repeat-containing protein At2g17140.